The chain runs to 410 residues: Peptidase T (410 aa).

A Zn(2+)-binding site is contributed by His-79. Residue Asp-81 is part of the active site. Asp-142 serves as a coordination point for Zn(2+). The Proton acceptor role is filled by Glu-176. Residues Glu-177, Asp-199, and His-381 each contribute to the Zn(2+) site.

This sequence belongs to the peptidase M20B family. Zn(2+) serves as cofactor.

Its subcellular location is the cytoplasm. The catalysed reaction is Release of the N-terminal residue from a tripeptide.. Cleaves the N-terminal amino acid of tripeptides. This is Peptidase T from Bacillus mycoides (strain KBAB4) (Bacillus weihenstephanensis).